We begin with the raw amino-acid sequence, 396 residues long: MAEAWFETVAIAQQRAKRRLPKSVYSSLIAASEKGITVADNVAAFSELGFAPHVIGATDKRDLSTTVMGQEVSLPVIISPTGVQAVDPGGEVAVARAAAARGTVMGLSSFASKPIEEVIAANPKTFFQVYWQGGRDALAERVERARQAGAVGLVVTTDWTFSHGRDWGSPKIPEEMNLKTILRLSPEAITRPRWLWKFAKTLRPPDLRVPNQGRRGEPGPPFFAAYGEWMATPPPTWEDIGWLRELWGGPFMLKGVMRVDDAKRAVDAGVSAISVSNHGGNNLDGTPASIRALPAVSAAVGDQVEVLLDGGIRRGSDVVKAVALGARAVMIGRAYLWGLAANGQAGVENVLDILRGGIDSALMGLGHASVHDLSPADILVPTGFIRDLGVPSRRDV.

The 383-residue stretch at 1-383 (MAEAWFETVA…SPADILVPTG (383 aa)) folds into the FMN hydroxy acid dehydrogenase domain. Residues Ser108, Gln128, Thr156, and Lys254 each contribute to the FMN site. His278 acts as the Proton acceptor in catalysis. FMN-binding positions include 309 to 313 (DGGIR) and 332 to 333 (GR).

The protein belongs to the FMN-dependent alpha-hydroxy acid dehydrogenase family. The cofactor is FMN.

The enzyme catalyses 3-amino-5-[(4-hydroxyphenyl)methyl]-4,4-dimethyl-2-pyrrolidin-2-one + O2 + H2O = pre-mycofactocin + H2O2 + NH4(+). Functionally, involved in the biosynthesis of the enzyme cofactor mycofactocin (MFT). Catalyzes the oxidative deamination of AHDP (3-amino-5-[(4-hydroxyphenyl)methyl]-4,4-dimethyl-2-pyrrolidin-2-one), forming an alpha-keto amide moiety on the resulting molecule, which is called pre-mycofactocin (PMFT). This reaction occurs via a 5-[(4-hydroxyphenyl)methyl]-3-imino-4,4-dimethylpyrrolidin-2-one intermediate, which converts to PMFT. The alpha-keto amide moiety is the redox-active center for the redox activity of mycofactocin. This is Pre-mycofactocin synthase (mftD) from Mycobacterium tuberculosis (strain CDC 1551 / Oshkosh).